We begin with the raw amino-acid sequence, 109 residues long: Movement protein TGB2 (109 aa).

Topologically, residues 1–9 (MPLQPPPDH) are cytoplasmic. Residues 10–30 (TWAVRIIALGLAVTALIFTST) form a helical membrane-spanning segment. The Lumenal portion of the chain corresponds to 31–71 (RDTSRHVGDPSHSLPFGGHYRDGSKVIHYNSPRSSKPSNHT). Residues 72–92 (PYLLFAPIGIILLIHALHRLG) form a helical membrane-spanning segment. Residues 93-109 (NSAHICRCTHCMPHSQT) are Cytoplasmic-facing.

Belongs to the Tymovirales TGBp2 protein family.

The protein resides in the host endoplasmic reticulum membrane. Plays a role in viral cell-to-cell propagation, by facilitating genome transport to neighboring plant cells through plasmosdesmata,. This is Movement protein TGB2 from Citrus (ICRSV).